The following is a 160-amino-acid chain: Nascent polypeptide-associated complex subunit alpha (160 aa).

The NAC-A/B domain occupies threonine 10–leucine 75. Positions valine 120–threonine 159 constitute a UBA domain.

The protein belongs to the NAC-alpha family. As to quaternary structure, part of the nascent polypeptide-associated complex (NAC), consisting of nacA and nacB.

The protein localises to the cytoplasm. The protein resides in the nucleus. Its function is as follows. Component of the nascent polypeptide-associated complex (NAC), a dynamic component of the ribosomal exit tunnel, protecting the emerging polypeptides from interaction with other cytoplasmic proteins to ensure appropriate nascent protein targeting. The NAC complex also promotes mitochondrial protein import by enhancing productive ribosome interactions with the outer mitochondrial membrane and blocks the inappropriate interaction of ribosomes translating non-secretory nascent polypeptides with translocation sites in the membrane of the endoplasmic reticulum. May also be involved in transcription regulation. The chain is Nascent polypeptide-associated complex subunit alpha (nacA) from Dictyostelium discoideum (Social amoeba).